The chain runs to 568 residues: MTVSTFNRTWAKVIVNALLRYGVKHFCIAPGSRSTPLTLEALQLQQNQQAQCHSHFDERGLGFFALGIAKVTNDPVAIIVTSGTAVANLYPAVIEASLTHHKLIVLSADRPPELIGCGANQAIPQQGIFADYPIAGVNLPKPAEHYNAGWLVATIEQACVTQSQQGGVIHINAPFAEPLYEADENAIGTHPWLKPIQSWLINPQTKWINSQTIQSEVSMHENWDYWRTKRGVIVVGKLPVEQGIGIKAWAETLGWCLITDVQSCVDANLPYADIWLSNNTVHQRLLQADIVIQFGGQIVSKRVNKFLEAFKGEFWQVDEYSDYLNPFAHHQTRFVAKAHHFLRVHPPLRQKPWLLEPLALSQFCAGFIEQQVGGSLNEASLAHHIEEVLATSGNLFIGNSLFVRLVDALCKLPEGYPVYTNRGASGIDGLIATMAGVAKGSGQPTVGVIGDISALHDLNSVSLLNKISHPCILFVINNSGGAIFDMLPVEAQAKEQFYRLSHNYEFAPIATMFGIEYIRPFTWADLKAKLKLAYGRKGVTIVEIKVNDQDGSNLYKSLVKQISQAEIA.

It belongs to the TPP enzyme family. MenD subfamily. As to quaternary structure, homodimer. Mg(2+) is required as a cofactor. It depends on Mn(2+) as a cofactor. Thiamine diphosphate serves as cofactor.

The catalysed reaction is isochorismate + 2-oxoglutarate + H(+) = 5-enolpyruvoyl-6-hydroxy-2-succinyl-cyclohex-3-ene-1-carboxylate + CO2. It participates in quinol/quinone metabolism; 1,4-dihydroxy-2-naphthoate biosynthesis; 1,4-dihydroxy-2-naphthoate from chorismate: step 2/7. It functions in the pathway quinol/quinone metabolism; menaquinone biosynthesis. Catalyzes the thiamine diphosphate-dependent decarboxylation of 2-oxoglutarate and the subsequent addition of the resulting succinic semialdehyde-thiamine pyrophosphate anion to isochorismate to yield 2-succinyl-5-enolpyruvyl-6-hydroxy-3-cyclohexene-1-carboxylate (SEPHCHC). This is 2-succinyl-5-enolpyruvyl-6-hydroxy-3-cyclohexene-1-carboxylate synthase from Actinobacillus pleuropneumoniae serotype 7 (strain AP76).